Reading from the N-terminus, the 308-residue chain is uncharacterized protein (308 aa).

One can recognise an HTH lysR-type domain in the interval 1-60; sequence MNYSLKQLKVFVTVAQEKSFSRAGERIGLSQSAVSHSVKELENHTGVRLLDRTTREVVLT. The segment at residues 20-39 is a DNA-binding region (H-T-H motif); the sequence is FSRAGERIGLSQSAVSHSVK.

This sequence belongs to the LysR transcriptional regulatory family.

This is an uncharacterized protein from Shigella flexneri.